An 80-amino-acid polypeptide reads, in one-letter code: UPF0512 protein J (80 aa).

This sequence belongs to the UPF0512 family.

The polypeptide is UPF0512 protein J (Dictyostelium discoideum (Social amoeba)).